The chain runs to 210 residues: Somatotropin (210 aa).

The N-terminal stretch at 1 to 22 (MGQVFLLMPVLLVSCFLSQGAA) is a signal peptide. Zn(2+) is bound at residue histidine 38. Cysteine 71 and cysteine 183 form a disulfide bridge. Glutamate 192 lines the Zn(2+) pocket. The cysteines at positions 200 and 208 are disulfide-linked.

The protein belongs to the somatotropin/prolactin family.

It is found in the secreted. Growth hormone plays an important role in growth control and is involved in the regulation of several anabolic processes. Implicated as an osmoregulatory substance important for seawater adaptation. The chain is Somatotropin (gh) from Oncorhynchus kisutch (Coho salmon).